A 472-amino-acid chain; its full sequence is Bone morphogenetic protein 3 (472 aa).

Residues 1–22 form the signal peptide; the sequence is MAGASRLLFLWLGCFCVSLAQG. Residues 23-362 constitute a propeptide that is removed on maturation; it reads ERPKPPFPEL…EQTLKKARRK (340 aa). Residues 27 to 37 show a composition bias toward basic and acidic residues; sequence PPFPELRKAVP. The disordered stretch occupies residues 27–53; it reads PPFPELRKAVPGDRTAGGGPDSELQPQ. Asn117, Asn141, Asn175, and Asn220 each carry an N-linked (GlcNAc...) asparagine glycan. The segment at 320–350 is disordered; that stretch reads PYKTLQAQAPEKSKNKKKQRKGPHRKSQTLQ. Residues 333–346 show a composition bias toward basic residues; that stretch reads KNKKKQRKGPHRKS. 3 cysteine pairs are disulfide-bonded: Cys370-Cys437, Cys399-Cys469, and Cys403-Cys471. A glycan (N-linked (GlcNAc...) asparagine) is linked at Asn463.

This sequence belongs to the TGF-beta family. As to quaternary structure, homodimer; disulfide-linked. Interacts with type II receptor ACVR2B. In terms of tissue distribution, expressed in adult and fetal cartilage.

It is found in the secreted. Growth factor of the TGF-beta superfamily that plays an essential role in developmental process by inducing and patterning early skeletal formation and by negatively regulating bone density. Antagonizes the ability of certain osteogenic BMPs to induce osteoprogenitor differentiation and ossification. Initiates signaling cascades by associating with type II receptor ACVR2B to activate SMAD2-dependent and SMAD-independent signaling cascades including TAK1 and JNK pathways. This Homo sapiens (Human) protein is Bone morphogenetic protein 3 (BMP3).